A 588-amino-acid polypeptide reads, in one-letter code: Probable G-protein coupled receptor 162 (588 aa).

Residues 1–17 (MARGGLGAEEASLRSNA) are Extracellular-facing. Residues 18 to 38 (LSWLACGLLALLANAWIILSI) form a helical membrane-spanning segment. The Cytoplasmic segment spans residues 39-49 (SAKQQKHKPLE). Residues 50 to 70 (LLLCFLAGTHILMAAVPLTTF) form a helical membrane-spanning segment. At 71–91 (AVVQLRRQASSDYDWNESICK) the chain is on the extracellular side. A glycan (N-linked (GlcNAc...) asparagine) is linked at Asn-86. Residues 92 to 112 (VFVSTYYTLALATCFTVASLS) traverse the membrane as a helical segment. The Cytoplasmic portion of the chain corresponds to 113–133 (YHRMWMVRWPVNYRLSNAKKQ). Residues 134–154 (ALHAVMGIWMVSFILSTLPSI) form a helical membrane-spanning segment. Residues 155–174 (GWHNNGERYYARGCQFIVSK) are Extracellular-facing. The helical transmembrane segment at 175 to 195 (IGLGFGVCFSLLLLGGIVMGL) threads the bilayer. At 196–275 (VCVAITFYQT…SLQVTNLVSA (80 aa)) the chain is on the cytoplasmic side. The chain crosses the membrane as a helical span at residues 276–296 (IVFLYDSLTGVPILVVSFFSL). Residues 297–303 (KSDSAPP) are Extracellular-facing. Residues 304-324 (WMVLAVLWCSMAQTLLLPSFI) form a helical membrane-spanning segment. Topologically, residues 325–588 (WSCERYRADV…GNPIFPQLTL (264 aa)) are cytoplasmic. Phosphoserine is present on residues Ser-413 and Ser-435. Disordered regions lie at residues 511 to 545 (ETPL…SPDS) and 561 to 588 (SLTG…QLTL). The span at 514–525 (LPSPTASPGPSP) shows a compositional bias: pro residues. The segment covering 530–540 (PLGFSPRRLSL) has biased composition (low complexity).

The protein belongs to the G-protein coupled receptor 1 family.

It is found in the cell membrane. Orphan receptor. This chain is Probable G-protein coupled receptor 162 (Gpr162), found in Mus musculus (Mouse).